The following is a 342-amino-acid chain: Heat-inducible transcription repressor HrcA (342 aa).

It belongs to the HrcA family.

Its function is as follows. Negative regulator of class I heat shock genes (grpE-dnaK-dnaJ and groELS operons). Prevents heat-shock induction of these operons. In Geobacter sulfurreducens (strain ATCC 51573 / DSM 12127 / PCA), this protein is Heat-inducible transcription repressor HrcA.